The sequence spans 476 residues: Siroheme synthase 1 (476 aa).

Residues 1-203 form a precorrin-2 dehydrogenase /sirohydrochlorin ferrochelatase region; it reads MDYLPIFADL…GQTAEAQRQL (203 aa). NAD(+)-binding positions include 22-23 and 43-44; these read EV and QS. The residue at position 128 (serine 128) is a Phosphoserine. A uroporphyrinogen-III C-methyltransferase region spans residues 219–476; that stretch reads GEIALVGAGP…VSRPAVVNLA (258 aa). Residue proline 228 coordinates S-adenosyl-L-methionine. Residue aspartate 251 is the Proton acceptor of the active site. Lysine 273 (proton donor) is an active-site residue. S-adenosyl-L-methionine is bound by residues 304–306, isoleucine 309, 334–335, methionine 386, and glycine 415; these read GGD and TA.

It in the N-terminal section; belongs to the precorrin-2 dehydrogenase / sirohydrochlorin ferrochelatase family. This sequence in the C-terminal section; belongs to the precorrin methyltransferase family.

It catalyses the reaction uroporphyrinogen III + 2 S-adenosyl-L-methionine = precorrin-2 + 2 S-adenosyl-L-homocysteine + H(+). The catalysed reaction is precorrin-2 + NAD(+) = sirohydrochlorin + NADH + 2 H(+). The enzyme catalyses siroheme + 2 H(+) = sirohydrochlorin + Fe(2+). It participates in cofactor biosynthesis; adenosylcobalamin biosynthesis; precorrin-2 from uroporphyrinogen III: step 1/1. Its pathway is cofactor biosynthesis; adenosylcobalamin biosynthesis; sirohydrochlorin from precorrin-2: step 1/1. It functions in the pathway porphyrin-containing compound metabolism; siroheme biosynthesis; precorrin-2 from uroporphyrinogen III: step 1/1. The protein operates within porphyrin-containing compound metabolism; siroheme biosynthesis; siroheme from sirohydrochlorin: step 1/1. It participates in porphyrin-containing compound metabolism; siroheme biosynthesis; sirohydrochlorin from precorrin-2: step 1/1. Multifunctional enzyme that catalyzes the SAM-dependent methylations of uroporphyrinogen III at position C-2 and C-7 to form precorrin-2 via precorrin-1. Then it catalyzes the NAD-dependent ring dehydrogenation of precorrin-2 to yield sirohydrochlorin. Finally, it catalyzes the ferrochelation of sirohydrochlorin to yield siroheme. In Serratia proteamaculans (strain 568), this protein is Siroheme synthase 1.